Reading from the N-terminus, the 135-residue chain is S-protein homolog 20 (135 aa).

Residues methionine 1 to alanine 26 form the signal peptide. N-linked (GlcNAc...) asparagine glycosylation occurs at asparagine 88.

This sequence belongs to the plant self-incompatibility (S1) protein family.

The protein localises to the secreted. The sequence is that of S-protein homolog 20 from Arabidopsis thaliana (Mouse-ear cress).